Here is a 245-residue protein sequence, read N- to C-terminus: tRNA (guanine-N(7)-)-methyltransferase (245 aa).

Positions 69, 94, 121, and 144 each coordinate S-adenosyl-L-methionine. Residue Asp-144 is part of the active site. Residues Lys-148, Asp-180, and 217–220 (TKFE) contribute to the substrate site. Residues 200–225 (NLSSSGDYVPRPENRPKTKFERRGEG) are disordered. Positions 209-225 (PRPENRPKTKFERRGEG) are enriched in basic and acidic residues.

It belongs to the class I-like SAM-binding methyltransferase superfamily. TrmB family.

The catalysed reaction is guanosine(46) in tRNA + S-adenosyl-L-methionine = N(7)-methylguanosine(46) in tRNA + S-adenosyl-L-homocysteine. It functions in the pathway tRNA modification; N(7)-methylguanine-tRNA biosynthesis. Catalyzes the formation of N(7)-methylguanine at position 46 (m7G46) in tRNA. In Idiomarina loihiensis (strain ATCC BAA-735 / DSM 15497 / L2-TR), this protein is tRNA (guanine-N(7)-)-methyltransferase.